A 984-amino-acid polypeptide reads, in one-letter code: Ephrin type-B receptor 1 (984 aa).

A signal peptide spans 1 to 17 (MALDYLLLLLLASAVAA). Over 18-540 (MEETLMDTRT…YKSELREQLP (523 aa)) the chain is Extracellular. An Eph LBD domain is found at 19–201 (EETLMDTRTA…FFKKCPSIVQ (183 aa)). Fibronectin type-III domains follow at residues 322-432 (VPSG…TNQA) and 433-528 (APST…TLTD). Residues N334, N426, and N480 are each glycosylated (N-linked (GlcNAc...) asparagine). A helical transmembrane segment spans residues 541-563 (LIAGSAAAGVVFVVSLVAISIVC). At 564–984 (SRKRAYSKEA…QISQSPTAMA (421 aa)) the chain is on the cytoplasmic side. Y600 is modified (phosphotyrosine). In terms of domain architecture, Protein kinase spans 619–882 (VKIEEVIGAG…EIVNTLDKMI (264 aa)). ATP-binding positions include 625–633 (IGAGEFGEV) and K651. The Proton acceptor role is filled by D744. An SAM domain is found at 911-975 (TAFTTVDDWL…LNSIHSMRVQ (65 aa)). Y928 is subject to Phosphotyrosine; by autocatalysis. A PDZ-binding motif is present at residues 982–984 (AMA).

Belongs to the protein kinase superfamily. Tyr protein kinase family. Ephrin receptor subfamily. Heterotetramer upon binding of the ligand. The heterotetramer is composed of an ephrin dimer and a receptor dimer. Oligomerization is probably required to induce biological responses. Interacts with EPHB6; transphosphorylates EPHB6 to form an active signaling complex. Interacts with PICK1. Interacts (through Tyr-594) with NCK1 (via SH2 domain); activates the JUN cascade to regulate cell adhesion. The ligand-activated form interacts (through Tyr-928) with GRB7 and GRB10 (via SH2 domains). The ligand-activated form interacts (residues within the catalytic domain) with GRB2 (via SH2 domain). Interacts with GRB2, SHC1 and SRC; activates the MAPK/ERK cascade to regulate cell migration. Interacts with CBL; regulates receptor degradation through ubiquitination. Interacts with ACP1. Post-translationally, phosphorylated. Autophosphorylation is stimulated by the ligand EFNB1. Required for interaction with SH2 domain-containing interactors, for activation of the MAPK/ERK and JUN signaling cascades and for ubiquitination by CBL. In terms of processing, ubiquitinated; (EFNB1)ligand-induced poly- and/or multi-ubiquitination by CBL is regulated by SRC and leads to lysosomal degradation. In terms of tissue distribution, preferentially expressed in brain.

The protein localises to the cell membrane. Its subcellular location is the early endosome membrane. It is found in the cell projection. The protein resides in the dendrite. The catalysed reaction is L-tyrosyl-[protein] + ATP = O-phospho-L-tyrosyl-[protein] + ADP + H(+). In terms of biological role, receptor tyrosine kinase which binds promiscuously transmembrane ephrin-B family ligands residing on adjacent cells, leading to contact-dependent bidirectional signaling into neighboring cells. The signaling pathway downstream of the receptor is referred to as forward signaling while the signaling pathway downstream of the ephrin ligand is referred to as reverse signaling. Cognate/functional ephrin ligands for this receptor include EFNB1, EFNB2 and EFNB3. During nervous system development, regulates retinal axon guidance redirecting ipsilaterally ventrotemporal retinal ganglion cells axons at the optic chiasm midline. This probably requires repulsive interaction with EFNB2. In the adult nervous system together with EFNB3, regulates chemotaxis, proliferation and polarity of the hippocampus neural progenitors. In addition to its role in axon guidance also plays an important redundant role with other ephrin-B receptors in development and maturation of dendritic spines and synapse formation. May also regulate angiogenesis. More generally, may play a role in targeted cell migration and adhesion. Upon activation by EFNB1 and probably other ephrin-B ligands activates the MAPK/ERK and the JNK signaling cascades to regulate cell migration and adhesion respectively. Involved in the maintenance of the pool of satellite cells (muscle stem cells) by promoting their self-renewal and reducing their activation and differentiation. This chain is Ephrin type-B receptor 1 (EPHB1), found in Homo sapiens (Human).